Here is a 199-residue protein sequence, read N- to C-terminus: Peptidyl-tRNA hydrolase (199 aa).

Tyr18 serves as a coordination point for tRNA. The Proton acceptor role is filled by His23. TRNA-binding residues include Tyr72, Asn74, and Asn120.

This sequence belongs to the PTH family. Monomer.

The protein localises to the cytoplasm. The enzyme catalyses an N-acyl-L-alpha-aminoacyl-tRNA + H2O = an N-acyl-L-amino acid + a tRNA + H(+). Functionally, hydrolyzes ribosome-free peptidyl-tRNAs (with 1 or more amino acids incorporated), which drop off the ribosome during protein synthesis, or as a result of ribosome stalling. Its function is as follows. Catalyzes the release of premature peptidyl moieties from peptidyl-tRNA molecules trapped in stalled 50S ribosomal subunits, and thus maintains levels of free tRNAs and 50S ribosomes. The sequence is that of Peptidyl-tRNA hydrolase from Bifidobacterium adolescentis (strain ATCC 15703 / DSM 20083 / NCTC 11814 / E194a).